The chain runs to 332 residues: uncharacterized protein (332 aa).

It belongs to the bacterial solute-binding protein 1 family. WtpA subfamily.

This is an uncharacterized protein from Methanococcus maripaludis (strain DSM 14266 / JCM 13030 / NBRC 101832 / S2 / LL).